A 238-amino-acid polypeptide reads, in one-letter code: NADH-quinone oxidoreductase subunit C (238 aa).

A disordered region spans residues methionine 1 to glutamate 20.

This sequence belongs to the complex I 30 kDa subunit family. As to quaternary structure, NDH-1 is composed of 14 different subunits. Subunits NuoB, C, D, E, F, and G constitute the peripheral sector of the complex.

The protein localises to the cell membrane. It catalyses the reaction a quinone + NADH + 5 H(+)(in) = a quinol + NAD(+) + 4 H(+)(out). NDH-1 shuttles electrons from NADH, via FMN and iron-sulfur (Fe-S) centers, to quinones in the respiratory chain. The immediate electron acceptor for the enzyme in this species is believed to be a menaquinone. Couples the redox reaction to proton translocation (for every two electrons transferred, four hydrogen ions are translocated across the cytoplasmic membrane), and thus conserves the redox energy in a proton gradient. This Mycobacterium marinum (strain ATCC BAA-535 / M) protein is NADH-quinone oxidoreductase subunit C.